The sequence spans 455 residues: Probable glycine dehydrogenase (decarboxylating) subunit 1 (455 aa).

It belongs to the GcvP family. N-terminal subunit subfamily. As to quaternary structure, the glycine cleavage system is composed of four proteins: P, T, L and H. In this organism, the P 'protein' is a heterodimer of two subunits.

It catalyses the reaction N(6)-[(R)-lipoyl]-L-lysyl-[glycine-cleavage complex H protein] + glycine + H(+) = N(6)-[(R)-S(8)-aminomethyldihydrolipoyl]-L-lysyl-[glycine-cleavage complex H protein] + CO2. Its function is as follows. The glycine cleavage system catalyzes the degradation of glycine. The P protein binds the alpha-amino group of glycine through its pyridoxal phosphate cofactor; CO(2) is released and the remaining methylamine moiety is then transferred to the lipoamide cofactor of the H protein. The chain is Probable glycine dehydrogenase (decarboxylating) subunit 1 from Francisella tularensis subsp. tularensis (strain FSC 198).